Consider the following 876-residue polypeptide: uncharacterized protein (876 aa).

Residues 37–48 (DEDKSNNDDRRS) show a composition bias toward basic and acidic residues. Disordered stretches follow at residues 37-67 (DEDKSNNDDRRSLASILDSSSSVKKKGKGSN), 112-155 (DESG…RNIK), 226-254 (KKKSSEGATPTIKFNPPIEDGFTPLTKSQ), and 330-353 (MMMDDSRSVSSARRSRSRSRSRSI). Phosphoserine is present on residues serine 48 and serine 51. Residues 49 to 58 (LASILDSSSS) show a composition bias toward low complexity. Residues 115–131 (GFTSDNNADYFSGNSYS) show a composition bias toward polar residues. Phosphoserine is present on residues serine 360, serine 510, serine 552, and serine 577. The segment at 490 to 513 (PEVTKQKNTSGPKPGFSHSKSADA) is disordered. Disordered regions lie at residues 661-728 (ITGG…RSPQ) and 750-876 (RHSL…FGRL). Residues 689–699 (SKSKSRSSSKS) show a composition bias toward basic residues. Over residues 717–726 (SSASASRSRS) the composition is skewed to low complexity. The residue at position 775 (serine 775) is a Phosphoserine. Composition is skewed to low complexity over residues 794 to 808 (NKDSSLRKVSSSSSL) and 842 to 854 (FSFFKSKSRSPSS).

This is an uncharacterized protein from Saccharomyces cerevisiae (strain ATCC 204508 / S288c) (Baker's yeast).